A 97-amino-acid polypeptide reads, in one-letter code: Alpha-latrotoxin associated low molecular weight protein 2 (97 aa).

The signal sequence occupies residues 1 to 19 (MFKLICIVFIATILSITSA). Disulfide bonds link cysteine 36-cysteine 72, cysteine 52-cysteine 68, and cysteine 55-cysteine 81.

It belongs to the arthropod CHH/MIH/GIH/VIH hormone family. In terms of tissue distribution, expressed by the venom gland.

It is found in the secreted. May increase the toxicity of alpha-latrotoxin and/or other venom components. Is non-toxic to mice and to the cockroach Periplaneta americana. The chain is Alpha-latrotoxin associated low molecular weight protein 2 from Steatoda grossa (False black widow).